A 166-amino-acid chain; its full sequence is Ribosome maturation factor RimP (166 aa).

The protein belongs to the RimP family.

It localises to the cytoplasm. Functionally, required for maturation of 30S ribosomal subunits. This is Ribosome maturation factor RimP from Psychrobacter sp. (strain PRwf-1).